The primary structure comprises 626 residues: Division abnormally delayed protein (626 aa).

Positions 1–26 are cleaved as a signal peptide; it reads MAARSVRLAQLLLFTLLCGFVGLSAA. Over residues 41-52 the composition is skewed to basic residues; sequence LHSATTHHRRRL. Residues 41–65 are disordered; the sequence is LHSATTHHRRRLQRDSRAKDAVGGS. A glycan (N-linked (GlcNAc...) asparagine; atypical) is linked at Asn97. Residues Asn101, Asn150, and Asn187 are each glycosylated (N-linked (GlcNAc...) asparagine). The disordered stretch occupies residues 533 to 607; that stretch reads NSIQATHDIQ…GKTSGSNPLE (75 aa). Ser549, Ser569, Ser573, and Ser601 each carry an O-linked (Xyl...) (heparan sulfate) serine glycan. Over residues 565 to 575 the composition is skewed to gly residues; it reads GAHGSGDGSGD. Gly602 is lipidated: GPI-anchor amidated glycine. Residues 603 to 626 constitute a propeptide, removed in mature form; the sequence is SNPLEGTATWMLLTLVTMLFSSCS.

Belongs to the glypican family. In terms of assembly, interacts with nord; the interaction promotes dally degradation. Interacts with Magu. As part of the dally/ Magu complex, associates with fwe (isoforms ubi, LoseA and LoseB) and is unable to interact with fwe independently of Magu.

It localises to the cell membrane. Its function is as follows. Cell surface proteoglycan that bears heparan sulfate. Functions as a coreceptor for growth factors and morphogens, such as the products of dpp, to regulate signaling and distribution of these ligands. Required for cell division patterning during postembryonic development of the nervous system. Plays a role in dpp/BMP signaling possibly by stabilizing dpp and thereby creating a morphological gradient during wing development. Might have a role in testis development. Functions with magu and fwe in a mechanism of scaling, which utilises apoptosis to ensure that the dpp patterning gradient remains proportional to the size of the growing wing. In this mechanism, fwe represses dally and Magu-dependent activity in expanding the gradient, and dally/Magu inhibits fwe-dependent apoptosis to keep cell death rate low. When the levels of these different proteins are optimally regulated the gradient correctly scales with organ growth but when this fails, fwe-mediated apoptosis is activated to trim the developing tissue to match the correct size of the gradient. The protein is Division abnormally delayed protein (dally) of Drosophila melanogaster (Fruit fly).